The following is a 387-amino-acid chain: Eukaryotic translation initiation factor 3 subunit M (387 aa).

The region spanning 181–340 (RSSKVMIELL…RKVHISSTMH (160 aa)) is the PCI domain.

Belongs to the eIF-3 subunit M family. In terms of assembly, component of the eukaryotic translation initiation factor 3 (eIF-3) complex. The eIF-3 complex interacts with pix.

It is found in the cytoplasm. The protein resides in the golgi apparatus. Functionally, component of the eukaryotic translation initiation factor 3 (eIF-3) complex, which is involved in protein synthesis of a specialized repertoire of mRNAs and, together with other initiation factors, stimulates binding of mRNA and methionyl-tRNAi to the 40S ribosome. The eIF-3 complex specifically targets and initiates translation of a subset of mRNAs involved in cell proliferation. In Drosophila willistoni (Fruit fly), this protein is Eukaryotic translation initiation factor 3 subunit M.